Reading from the N-terminus, the 387-residue chain is MQTGHPADGVYFGLMSGTSMDGVDGIAVRFEAGKPPAVLSEAFVGFADTLRDALFALQQPGDDEIEREALAANALAARYAVCCHELLRTAGLSPDDVRALGVHGQTVRHRPERGYTRQLNNAALLAELTRIDVIADFRSRDVAAGGQGAPLVPAFHATVFGSPDETRVVCNLGGISNITILPAGGGPQGEGHARNDTVRGHDCGPANALIDAWVERHLKQPFDDGGRFAARGKVDETLLAALLDEPYFRQNAPKSTGRDLFNADWLDAKLAGFQHLAPENVQATLTALTAATVADEIARHAGDCRAVYVCGGGARNPVLLDALATALAARGLDAAVATTAALGVPPQQVESLAFAWLAYRFNARAPGNVSTVTGAAGERVLGALYPR.

Residue 17-24 (GTSMDGVD) participates in ATP binding.

Belongs to the anhydro-N-acetylmuramic acid kinase family.

The catalysed reaction is 1,6-anhydro-N-acetyl-beta-muramate + ATP + H2O = N-acetyl-D-muramate 6-phosphate + ADP + H(+). It functions in the pathway amino-sugar metabolism; 1,6-anhydro-N-acetylmuramate degradation. Its pathway is cell wall biogenesis; peptidoglycan recycling. In terms of biological role, catalyzes the specific phosphorylation of 1,6-anhydro-N-acetylmuramic acid (anhMurNAc) with the simultaneous cleavage of the 1,6-anhydro ring, generating MurNAc-6-P. Is required for the utilization of anhMurNAc either imported from the medium or derived from its own cell wall murein, and thus plays a role in cell wall recycling. This is Anhydro-N-acetylmuramic acid kinase from Burkholderia pseudomallei (strain K96243).